Here is a 744-residue protein sequence, read N- to C-terminus: 1,4-alpha-glucan branching enzyme GlgB (744 aa).

Catalysis depends on D415, which acts as the Nucleophile. The active-site Proton donor is the E468.

This sequence belongs to the glycosyl hydrolase 13 family. GlgB subfamily. Monomer.

The catalysed reaction is Transfers a segment of a (1-&gt;4)-alpha-D-glucan chain to a primary hydroxy group in a similar glucan chain.. The protein operates within glycan biosynthesis; glycogen biosynthesis. Catalyzes the formation of the alpha-1,6-glucosidic linkages in glycogen by scission of a 1,4-alpha-linked oligosaccharide from growing alpha-1,4-glucan chains and the subsequent attachment of the oligosaccharide to the alpha-1,6 position. The chain is 1,4-alpha-glucan branching enzyme GlgB from Shewanella frigidimarina (strain NCIMB 400).